We begin with the raw amino-acid sequence, 62 residues long: Large ribosomal subunit protein bL33 (62 aa).

This sequence belongs to the bacterial ribosomal protein bL33 family.

The chain is Large ribosomal subunit protein bL33 from Trichodesmium erythraeum (strain IMS101).